Consider the following 97-residue polypeptide: MAAQIPQSNEVRVGKKPVMNYVLATLTLLNQGVDRIEIKARGRAISKAVDTVEIVRNRFLPGQVRVAEIRIGSQTVTSADGRQSRISTIDIVLERVK.

Lysine 15 carries the N6-acetyllysine modification.

This sequence belongs to the histone-like Alba family. In terms of processing, acetylated. Acetylation at Lys-15 decreases DNA-binding affinity.

Its subcellular location is the cytoplasm. The protein resides in the chromosome. Its function is as follows. Binds double-stranded DNA tightly but without sequence specificity. Involved in DNA compaction. The sequence is that of DNA/RNA-binding protein Alba from Ignicoccus hospitalis (strain KIN4/I / DSM 18386 / JCM 14125).